The chain runs to 485 residues: GTPase Der (485 aa).

EngA-type G domains lie at 3 to 167 (PTIA…PEPE) and 176 to 349 (PVFA…NAAM). Residues 9-16 (GRPNVGKS), 56-60 (DTGGF), 119-122 (NKGE), 182-189 (GRPNVGKS), 229-233 (DTAGV), and 294-297 (NKWD) contribute to the GTP site. One can recognise a KH-like domain in the interval 350–434 (IKMPTPKITR…PLRIQYNVSE (85 aa)). Residues 435-485 (NPYENAEDKPKKKPLRRVSLSNRIEKREGRKEEKNRFKKKTKVSVKKQFSK) are disordered. Basic and acidic residues predominate over residues 457-469 (RIEKREGRKEEKN). Over residues 470-485 (RFKKKTKVSVKKQFSK) the composition is skewed to basic residues.

This sequence belongs to the TRAFAC class TrmE-Era-EngA-EngB-Septin-like GTPase superfamily. EngA (Der) GTPase family. In terms of assembly, associates with the 50S ribosomal subunit.

GTPase that plays an essential role in the late steps of ribosome biogenesis. In Neisseria meningitidis serogroup B (strain ATCC BAA-335 / MC58), this protein is GTPase Der.